We begin with the raw amino-acid sequence, 388 residues long: MPRDYYDILGVDEDASDKEIKKAYRKKAMEYHPDRNPDDPEAEQKFKEASEAYEVLSDPEKRQRYDQFGHDGVDSGAGGGRRGRGRGFHDIEDIFDAFSDIFGGAPGGGRGRGRSERGRGRPGSDLRVSLSLTLEEIAEGTEKNLRLQKYLECESCDGTGAEGGMGGQNFSMCPKCDGTGEIRQVSRSVFGQVVNVQPCPRCEGEGRIIDNLCDDCGGEGRVQGEESISINVPPGVMEGNYLTLGDAGNAGLRGGPSGDLRIEIEEEPHEHFERDGLDIYYDLHLSFPEAALGTEVDVPTLEGEARLEVDPGVQAGKILRMRDRGLPDLEGSGQGDQMIRVHVWTPQELTAEEEELLDQLRAHDNFQPRPPEEDTQKSFFRRVSDVFS.

The J domain maps to 4-69 (DYYDILGVDE…EKRQRYDQFG (66 aa)). Composition is skewed to basic and acidic residues over residues 27-50 (KAME…KEAS), 58-73 (DPEK…HDGV), and 113-124 (GRSERGRGRPGS). Disordered regions lie at residues 27–86 (KAME…GRGR) and 99–125 (SDIF…PGSD). The CR-type zinc finger occupies 140-225 (GTEKNLRLQK…CGGEGRVQGE (86 aa)). Zn(2+) contacts are provided by Cys153, Cys156, Cys173, Cys176, Cys199, Cys202, Cys213, and Cys216. CXXCXGXG motif repeat units follow at residues 153–160 (CESCDGTG), 173–180 (CPKCDGTG), 199–206 (CPRCEGEG), and 213–220 (CDDCGGEG). The span at 362–376 (AHDNFQPRPPEEDTQ) shows a compositional bias: basic and acidic residues. The disordered stretch occupies residues 362-388 (AHDNFQPRPPEEDTQKSFFRRVSDVFS).

Belongs to the DnaJ family. Homodimer. Zn(2+) is required as a cofactor.

Its subcellular location is the cytoplasm. In terms of biological role, participates actively in the response to hyperosmotic and heat shock by preventing the aggregation of stress-denatured proteins and by disaggregating proteins, also in an autonomous, DnaK-independent fashion. Unfolded proteins bind initially to DnaJ; upon interaction with the DnaJ-bound protein, DnaK hydrolyzes its bound ATP, resulting in the formation of a stable complex. GrpE releases ADP from DnaK; ATP binding to DnaK triggers the release of the substrate protein, thus completing the reaction cycle. Several rounds of ATP-dependent interactions between DnaJ, DnaK and GrpE are required for fully efficient folding. Also involved, together with DnaK and GrpE, in the DNA replication of plasmids through activation of initiation proteins. The protein is Chaperone protein DnaJ of Salinibacter ruber (strain DSM 13855 / M31).